The sequence spans 113 residues: Large ribosomal subunit protein bL19 (113 aa).

Belongs to the bacterial ribosomal protein bL19 family.

In terms of biological role, this protein is located at the 30S-50S ribosomal subunit interface and may play a role in the structure and function of the aminoacyl-tRNA binding site. The polypeptide is Large ribosomal subunit protein bL19 (Mycobacterium leprae (strain Br4923)).